The following is a 530-amino-acid chain: Putative ABC transporter ATP-binding protein SSO1893 (530 aa).

ABC transporter domains are found at residues 6–243 (IRDL…LGLE) and 282–516 (ILFA…EPPL). ATP-binding positions include 38–45 (GRSGSGKS) and 314–321 (GKNGSGKT).

This sequence belongs to the ABC transporter superfamily.

It is found in the cell membrane. In terms of biological role, probably part of an ABC transporter complex. Responsible for energy coupling to the transport system. This is Putative ABC transporter ATP-binding protein SSO1893 from Saccharolobus solfataricus (strain ATCC 35092 / DSM 1617 / JCM 11322 / P2) (Sulfolobus solfataricus).